We begin with the raw amino-acid sequence, 324 residues long: Probable fructokinase-5 (324 aa).

The protein belongs to the carbohydrate kinase PfkB family.

It catalyses the reaction D-fructose + ATP = D-fructose 6-phosphate + ADP + H(+). It functions in the pathway glycan biosynthesis; starch biosynthesis. In terms of biological role, may play an important role in maintaining the flux of carbon towards starch formation. This chain is Probable fructokinase-5, found in Arabidopsis thaliana (Mouse-ear cress).